The following is a 672-amino-acid chain: DNA ligase (672 aa).

NAD(+)-binding positions include 32–36 (DAEYD), 81–82 (SL), and E113. The active-site N6-AMP-lysine intermediate is K115. R136, E173, K290, and K314 together coordinate NAD(+). Zn(2+) contacts are provided by C408, C411, C426, and C432. One can recognise a BRCT domain in the interval 592–672 (EIDSPFAGKT…EMIRLLGESS (81 aa)).

It belongs to the NAD-dependent DNA ligase family. LigA subfamily. Mg(2+) serves as cofactor. Requires Mn(2+) as cofactor.

The catalysed reaction is NAD(+) + (deoxyribonucleotide)n-3'-hydroxyl + 5'-phospho-(deoxyribonucleotide)m = (deoxyribonucleotide)n+m + AMP + beta-nicotinamide D-nucleotide.. DNA ligase that catalyzes the formation of phosphodiester linkages between 5'-phosphoryl and 3'-hydroxyl groups in double-stranded DNA using NAD as a coenzyme and as the energy source for the reaction. It is essential for DNA replication and repair of damaged DNA. The chain is DNA ligase from Yersinia enterocolitica serotype O:8 / biotype 1B (strain NCTC 13174 / 8081).